Reading from the N-terminus, the 636-residue chain is Protein SOSEKI 2 (636 aa).

The segment at 9-103 (HKIEVIYLLS…YVLKALEVMD (95 aa)) is DIX-like oligomerization domain. Disordered regions lie at residues 164–188 (VHNNMTGKANRNEQGDAYGTTSRVP), 281–304 (HGRLSRRSSDTLRDSNSVGNTVDI), 340–393 (VEGS…TSAK), and 499–524 (LGSGQASESFSPASPHAPQRPIVSRP). 2 stretches are compositionally biased toward polar residues: residues 375 to 390 (SSKSATQNSRPVTYET) and 499 to 510 (LGSGQASESFSP).

It belongs to the SOSEKI family. In terms of assembly, homodimer. Forms long polymer filaments with other SOKs proteins polymers crucial for polar localization and biological activity.

It localises to the cell membrane. Functionally, SOSEKI proteins locally interpret global polarity cues and can influence cell division orientation to coordinate cell polarization relative to body axes. This chain is Protein SOSEKI 2, found in Physcomitrium patens (Spreading-leaved earth moss).